The following is a 265-amino-acid chain: Regulator of calcineurin 2 (265 aa).

Phosphoserine is present on residues Ser104 and Ser110. Disordered stretches follow at residues 127–213 (LLSI…DKSA) and 242–265 (ENDV…EFFH). Position 132 is a phosphothreonine (Thr132). 2 stretches are compositionally biased toward low complexity: residues 141 to 161 (SSSL…LESP) and 182 to 202 (LSRS…QTSL). 8 positions are modified to phosphoserine: Ser152, Ser157, Ser160, Ser183, Ser187, Ser193, Ser201, and Ser255.

Phosphorylation of Ser-152 and Ser-160 is induced 2-fold in response to mating pheromone.

The protein resides in the cytoplasm. This chain is Regulator of calcineurin 2 (RCN2), found in Saccharomyces cerevisiae (strain ATCC 204508 / S288c) (Baker's yeast).